The chain runs to 544 residues: Chaperonin GroEL (544 aa).

Residues 30–33 (TLGP), lysine 51, 87–91 (DGTTT), glycine 415, 479–481 (NAA), and aspartate 495 contribute to the ATP site.

It belongs to the chaperonin (HSP60) family. As to quaternary structure, forms a cylinder of 14 subunits composed of two heptameric rings stacked back-to-back. Interacts with the co-chaperonin GroES.

The protein localises to the cytoplasm. It catalyses the reaction ATP + H2O + a folded polypeptide = ADP + phosphate + an unfolded polypeptide.. Its function is as follows. Together with its co-chaperonin GroES, plays an essential role in assisting protein folding. The GroEL-GroES system forms a nano-cage that allows encapsulation of the non-native substrate proteins and provides a physical environment optimized to promote and accelerate protein folding. This is Chaperonin GroEL from Francisella tularensis subsp. novicida (strain U112).